An 855-amino-acid polypeptide reads, in one-letter code: Protein KRI1 homolog (855 aa).

Disordered regions lie at residues 47–67 (VSES…VDPK), 82–117 (KDPC…KAKP), 130–196 (EHNG…KTKE), 312–342 (SLRR…MKEL), 424–453 (YDPR…CDYD), and 589–855 (KSLY…KKDN). Over residues 48–64 (SESEFDSDSSSSEEDEV) the composition is skewed to acidic residues. Residues 82–91 (KDPCIYDKGT) are compositionally biased toward basic and acidic residues. A phosphoserine mark is found at Ser-95, Ser-97, Ser-98, Ser-137, and Ser-138. The segment covering 160–176 (EEERRLKAEFRKVMNKE) has biased composition (basic and acidic residues). Ser-179 is subject to Phosphoserine. Residues 307-362 (RTIEQSLRRTDDKRKEKRKELKERKDQEKQQKMKELELVKEMKRKEIDEKIRKLKA) are a coiled coil. The segment covering 441-452 (CEDDDFNMDCDY) has biased composition (acidic residues). The span at 609-619 (VTPAEATAPAE) shows a compositional bias: low complexity. Positions 630-640 (KSKRKRLKRKA) are enriched in basic residues. Basic and acidic residues-rich tracts occupy residues 650–664 (VLKE…KEAD) and 674–692 (SSKK…DANQ). Polar residues-rich tracts occupy residues 720–748 (VQNG…TTES), 756–773 (SNGN…QQRQ), and 792–805 (ANGT…NQKP). A compositionally biased stretch (low complexity) spans 812-826 (KKTNNFKAKNKQNNN). Residues 842–855 (RKFHKREKYGKKDN) are compositionally biased toward basic residues.

This sequence belongs to the KRI1 family.

The sequence is that of Protein KRI1 homolog from Drosophila melanogaster (Fruit fly).